The sequence spans 703 residues: Probable ATP-dependent RNA helicase DHX35 (703 aa).

The region spanning 64–229 is the Helicase ATP-binding domain; it reads LYLIENYQTV…FNQNETSDPA (166 aa). Position 77–84 (77–84) interacts with ATP; that stretch reads GETGCGKS. The DEAH box motif lies at 176 to 179; sequence DEAH. One can recognise a Helicase C-terminal domain in the interval 261–438; that stretch reads TVETVVKIHQ…PVILQLKALG (178 aa).

Belongs to the DEAD box helicase family. DEAH subfamily. In terms of assembly, identified in the spliceosome C complex.

It carries out the reaction ATP + H2O = ADP + phosphate + H(+). Its function is as follows. May be involved in pre-mRNA splicing. The sequence is that of Probable ATP-dependent RNA helicase DHX35 (DHX35) from Homo sapiens (Human).